We begin with the raw amino-acid sequence, 393 residues long: Heparan sulfate glucosamine 3-O-sulfotransferase 3A1 (393 aa).

Over 1–24 (MAPSGPTGAQPSPAEPLSRSIFRK) the chain is Cytoplasmic. The chain crosses the membrane as a helical; Signal-anchor for type II membrane protein span at residues 25–43 (FLLMLCSLLTSLYVFYCLA). Residues 44–393 (ERCPPGSGPV…MTGRDFGWDG (350 aa)) are Lumenal-facing. The segment at 85 to 121 (QRRRRGRSGPGDSSDQEEQSPGLAAAPGGSGAGSSVA) is disordered. 3'-phosphoadenylyl sulfate is bound at residue 149–153 (KGGTR). Substrate contacts are provided by residues 171 to 177 (EPHFFDR) and 202 to 205 (KTPS). Positions 230 and 238 each coordinate 3'-phosphoadenylyl sulfate. N-linked (GlcNAc...) asparagine glycosylation occurs at Asn-260. 270–271 (WS) lines the substrate pocket. Asn-331 is a glycosylation site (N-linked (GlcNAc...) asparagine). Cys-338 and Cys-350 are oxidised to a cystine. A 3'-phosphoadenylyl sulfate-binding site is contributed by 355–359 (KGRAH).

This sequence belongs to the sulfotransferase 1 family.

The protein resides in the golgi apparatus membrane. The catalysed reaction is alpha-D-glucosaminyl-[heparan sulfate](n) + 3'-phosphoadenylyl sulfate = 3-sulfo-alpha-D-glucosaminyl-[heparan sulfate](n) + adenosine 3',5'-bisphosphate + H(+). Functionally, sulfotransferase that utilizes 3'-phospho-5'-adenylyl sulfate (PAPS) to catalyze the transfer of a sulfo group to an N-unsubstituted glucosamine linked to a 2-O-sulfo iduronic acid unit on heparan sulfate. Catalyzes the O-sulfation of glucosamine in IdoUA2S-GlcNS and also in IdoUA2S-GlcNH2. Unlike HS3ST1/3-OST-1, does not convert non-anticoagulant heparan sulfate to anticoagulant heparan sulfate. This chain is Heparan sulfate glucosamine 3-O-sulfotransferase 3A1 (Hs3st3a1), found in Mus musculus (Mouse).